Here is a 378-residue protein sequence, read N- to C-terminus: Chaperone protein DnaJ (378 aa).

Residues 5–70 (DYYEVLGLQK…EKRAMYDQYG (66 aa)) form the J domain. The segment at 135–213 (GVKKDIRIRT…CHGDGRVEKT (79 aa)) adopts a CR-type zinc-finger fold. Zn(2+)-binding residues include cysteine 148, cysteine 151, cysteine 165, cysteine 168, cysteine 187, cysteine 190, cysteine 201, and cysteine 204. CXXCXGXG motif repeat units follow at residues 148–155 (CDTCHGSG), 165–172 (CPHCHGSG), 187–194 (CPSCHGTG), and 201–208 (CKSCHGDG).

The protein belongs to the DnaJ family. Homodimer. Zn(2+) serves as cofactor.

It is found in the cytoplasm. Its function is as follows. Participates actively in the response to hyperosmotic and heat shock by preventing the aggregation of stress-denatured proteins and by disaggregating proteins, also in an autonomous, DnaK-independent fashion. Unfolded proteins bind initially to DnaJ; upon interaction with the DnaJ-bound protein, DnaK hydrolyzes its bound ATP, resulting in the formation of a stable complex. GrpE releases ADP from DnaK; ATP binding to DnaK triggers the release of the substrate protein, thus completing the reaction cycle. Several rounds of ATP-dependent interactions between DnaJ, DnaK and GrpE are required for fully efficient folding. Also involved, together with DnaK and GrpE, in the DNA replication of plasmids through activation of initiation proteins. This chain is Chaperone protein DnaJ, found in Glaesserella parasuis serovar 5 (strain SH0165) (Haemophilus parasuis).